Consider the following 337-residue polypeptide: Methylthioribose-1-phosphate isomerase (337 aa).

Substrate is bound by residues 51–53 (RGA), R88, and Q187. D228 acts as the Proton donor in catalysis. 238 to 239 (NK) contacts substrate.

It belongs to the eIF-2B alpha/beta/delta subunits family. MtnA subfamily.

It carries out the reaction 5-(methylsulfanyl)-alpha-D-ribose 1-phosphate = 5-(methylsulfanyl)-D-ribulose 1-phosphate. It functions in the pathway amino-acid biosynthesis; L-methionine biosynthesis via salvage pathway; L-methionine from S-methyl-5-thio-alpha-D-ribose 1-phosphate: step 1/6. In terms of biological role, catalyzes the interconversion of methylthioribose-1-phosphate (MTR-1-P) into methylthioribulose-1-phosphate (MTRu-1-P). The sequence is that of Methylthioribose-1-phosphate isomerase from Anaeromyxobacter sp. (strain Fw109-5).